The following is a 578-amino-acid chain: Arginine--tRNA ligase (578 aa).

The 'HIGH' region signature appears at 127 to 137 (PNLAKEMHVGH).

It belongs to the class-I aminoacyl-tRNA synthetase family. Monomer.

The protein resides in the cytoplasm. It catalyses the reaction tRNA(Arg) + L-arginine + ATP = L-arginyl-tRNA(Arg) + AMP + diphosphate. In Pseudomonas entomophila (strain L48), this protein is Arginine--tRNA ligase.